Consider the following 176-residue polypeptide: Ribosome maturation factor RimM (176 aa).

The 75-residue stretch at K99 to L173 folds into the PRC barrel domain.

This sequence belongs to the RimM family. Binds ribosomal protein uS19.

The protein localises to the cytoplasm. An accessory protein needed during the final step in the assembly of 30S ribosomal subunit, possibly for assembly of the head region. Essential for efficient processing of 16S rRNA. May be needed both before and after RbfA during the maturation of 16S rRNA. It has affinity for free ribosomal 30S subunits but not for 70S ribosomes. The chain is Ribosome maturation factor RimM from Prochlorococcus marinus (strain MIT 9211).